We begin with the raw amino-acid sequence, 647 residues long: Nucleoside triphosphatase I (647 aa).

The Helicase ATP-binding domain occupies 48–212; that stretch reads FIGLKNLNSM…NNLIGLLRPN (165 aa). Position 61–68 (61–68) interacts with ATP; the sequence is WDTGTGKT. Positions 150-153 match the DEXH box motif; it reads DEVH. Residues 378-541 form the Helicase C-terminal domain; that stretch reads YIEACRIILN…KINVVFDLLK (164 aa). The interval 467-533 is binding to the cap-specific mRNA (nucleoside-2'-O-)-methyltransferase; it reads DIIILDMPWN…DIIKNKQGKI (67 aa).

The protein belongs to the helicase family. NPH I subfamily. As to quaternary structure, monomer. Interacts (via C-terminus) with RAP94 (via N-terminus). Interacts with the cap-specific mRNA (nucleoside-2'-O-)-methyltransferase.

It is found in the virion. The catalysed reaction is a ribonucleoside 5'-triphosphate + H2O = a ribonucleoside 5'-diphosphate + phosphate + H(+). DNA-dependent ATPase required for providing the needed energy to achieve the termination of early transcripts. Acts in concert with the RAP94 subunit of the virion RNA polymerase and the capping enzyme/VTF to catalyze release of UUUUUNU-containing nascent RNA from the elongation complex. NPH-I must bind ssDNA in order to exhibit ATPase activity. This Choristoneura fumiferana (Spruce budworm moth) protein is Nucleoside triphosphatase I (NPH1).